We begin with the raw amino-acid sequence, 771 residues long: Rho GTPase-activating protein 26 (771 aa).

Positions 7–262 (EFSDCYLDSP…MKENPHEHLA (256 aa)) constitute a BAR domain. Residues 265 to 369 (PFTMEGYLYV…WMEAMDGREP (105 aa)) form the PH domain. A Rho-GAP domain is found at 383–568 (AQLDNIGFSI…IIIENYEEMF (186 aa)). The interval 575–712 (PQTNSQLHLS…SSTSSDSSPV (138 aa)) is disordered. Residues 608–617 (HSSEKEEKRN) show a composition bias toward basic and acidic residues. Residues 618–637 (SVNSSAESVSSSNANSSVNS) show a composition bias toward low complexity. 2 stretches are compositionally biased toward polar residues: residues 638-650 (TCTQ…NLNA) and 662-671 (RPNSLLNPKN). Low complexity-rich tracts occupy residues 673 to 683 (SGLLPSSLNPS) and 691 to 712 (PMVS…SSPV). The region spanning 713–771 (SVPRKAKALYACKAEHDSELSFSAGTVFENVCPSQEPGWLEGTLNGKTGLIPENYVEFL) is the SH3 domain.

The protein resides in the cell junction. It is found in the focal adhesion. It localises to the cytoplasm. The protein localises to the cytoskeleton. Its subcellular location is the endosome membrane. In terms of biological role, GTPase-activating protein for rhoa and cdc42. May be involved in the regulation of neosynthesized protein export through a Rab-endososomal dependent export route. This is Rho GTPase-activating protein 26 (arhgap26) from Xenopus laevis (African clawed frog).